Consider the following 462-residue polypeptide: MTTMTAERAPRIGMVSLGCPKALTDSELILTQLSAEGYETSKTFQGADLVIVNTCGFIDDAVKESLDTIGEALAENGKVIVTGCLGARTGADGGNMVRQLHPSVLAVTGPQATQQVLDAVHRNLPKPHDPFIDLVPGGMGIAGLKLTPRHYAYLKISEGCNHRCTFCIIPTLRGALVSRPIGAVLNEARALFAGGVKELLVISQDSSAYGVDMQYRTGFWDGQPLKTRLLELVQALGALAEPYGAWVRLHYVYPYPSVDALIPLMAQGRVLPYLDVPLQHSHPEVLRRMKRPASGERNLERIQRWREVCPEIVIRSSFIVGFPGETQAEFEHLLDFLRAARIDRVGCFAYSDVSGAVANDLPGMLPMPLRQERRARFMAVAEALSSAKLQRRVGATMQVLIDAAPGLGRKGGVGRSYADAPEIDGAVHLLPPEKISKTLKVGEFTQARIVGVRGHDLLAQPI.

The MTTase N-terminal domain occupies 10–125; that stretch reads PRIGMVSLGC…VLDAVHRNLP (116 aa). 6 residues coordinate [4Fe-4S] cluster: Cys-19, Cys-55, Cys-84, Cys-160, Cys-164, and Cys-167. The Radical SAM core domain occupies 146–388; the sequence is LTPRHYAYLK…AVAEALSSAK (243 aa). One can recognise a TRAM domain in the interval 390–462; that stretch reads QRRVGATMQV…RGHDLLAQPI (73 aa).

This sequence belongs to the methylthiotransferase family. RimO subfamily. [4Fe-4S] cluster is required as a cofactor.

The protein localises to the cytoplasm. It catalyses the reaction L-aspartate(89)-[ribosomal protein uS12]-hydrogen + (sulfur carrier)-SH + AH2 + 2 S-adenosyl-L-methionine = 3-methylsulfanyl-L-aspartate(89)-[ribosomal protein uS12]-hydrogen + (sulfur carrier)-H + 5'-deoxyadenosine + L-methionine + A + S-adenosyl-L-homocysteine + 2 H(+). In terms of biological role, catalyzes the methylthiolation of an aspartic acid residue of ribosomal protein uS12. The protein is Ribosomal protein uS12 methylthiotransferase RimO of Verminephrobacter eiseniae (strain EF01-2).